The chain runs to 62 residues: Zinc metalloproteinase-disintegrin-like BaG (62 aa).

Residues 24-54 enclose the Peptidase M12B domain; the sequence is KTDLLNRSHDNAQLSPINLVVAVIMAHEMGH. N-linked (GlcNAc...) asparagine glycosylation is present at Asn-29. Position 50 (His-50) interacts with Zn(2+). The active site involves Glu-51. His-54 contacts Zn(2+).

This sequence belongs to the venom metalloproteinase (M12B) family. P-III subfamily. P-IIIc sub-subfamily. In terms of assembly, dimer. The cofactor is Zn(2+). In terms of processing, the N-terminus is blocked. Expressed by the venom gland.

The protein localises to the secreted. Inhibited by EDTA, and 1,10-phenanthroline. Its function is as follows. Snake venom Zinc metalloproteinase that inhibits ADP-induced platelet aggregation and inhibits the alpha-5/beta-1 (ITGA5/ITGB1) integrin, a fibronectin receptor. Has caseinolytic activity. Induces the detachment of cells that are bound to fibronectin. This Bothrops alternatus (Urutu) protein is Zinc metalloproteinase-disintegrin-like BaG.